We begin with the raw amino-acid sequence, 282 residues long: 4-diphosphocytidyl-2-C-methyl-D-erythritol kinase (282 aa).

Lys9 is an active-site residue. 98 to 108 contributes to the ATP binding site; that stretch reads PMGGGLGGGSS. Residue Asp140 is part of the active site.

It belongs to the GHMP kinase family. IspE subfamily. As to quaternary structure, homodimer.

The enzyme catalyses 4-CDP-2-C-methyl-D-erythritol + ATP = 4-CDP-2-C-methyl-D-erythritol 2-phosphate + ADP + H(+). It functions in the pathway isoprenoid biosynthesis; isopentenyl diphosphate biosynthesis via DXP pathway; isopentenyl diphosphate from 1-deoxy-D-xylulose 5-phosphate: step 3/6. In terms of biological role, catalyzes the phosphorylation of the position 2 hydroxy group of 4-diphosphocytidyl-2C-methyl-D-erythritol. The chain is 4-diphosphocytidyl-2-C-methyl-D-erythritol kinase from Salmonella heidelberg (strain SL476).